The primary structure comprises 142 residues: Large ribosomal subunit protein uL13 (142 aa).

The protein belongs to the universal ribosomal protein uL13 family. Part of the 50S ribosomal subunit.

Functionally, this protein is one of the early assembly proteins of the 50S ribosomal subunit, although it is not seen to bind rRNA by itself. It is important during the early stages of 50S assembly. In Syntrophobacter fumaroxidans (strain DSM 10017 / MPOB), this protein is Large ribosomal subunit protein uL13.